A 36-amino-acid chain; its full sequence is Potassium channel toxin alpha-KTx 11.3 (36 aa).

Disulfide bonds link Cys-8-Cys-27, Cys-13-Cys-33, and Cys-17-Cys-35.

It belongs to the short scorpion toxin superfamily. Potassium channel inhibitor family. Alpha-KTx 11 subfamily. In terms of tissue distribution, expressed by the venom gland.

Its subcellular location is the secreted. In terms of biological role, binds and inhibits voltage-sensitive potassium channels. Inhibits the vertebrate potassium channel Kv1.1/KCNA1 with low affinity. This Parabuthus granulatus (Granulated thick-tailed scorpion) protein is Potassium channel toxin alpha-KTx 11.3.